A 262-amino-acid chain; its full sequence is uncharacterized protein (262 aa).

A coiled-coil region spans residues 41–118; sequence ELQKNEKIDK…EEKAEDFINK (78 aa).

This is an uncharacterized protein from Plasmodium falciparum (isolate 3D7).